We begin with the raw amino-acid sequence, 560 residues long: Dihydroxy-acid dehydratase (560 aa).

Aspartate 80 provides a ligand contact to Mg(2+). Residue cysteine 121 participates in [2Fe-2S] cluster binding. Residues aspartate 122 and lysine 123 each contribute to the Mg(2+) site. Lysine 123 bears the N6-carboxylysine mark. Cysteine 194 serves as a coordination point for [2Fe-2S] cluster. Position 447 (glutamate 447) interacts with Mg(2+). Serine 473 acts as the Proton acceptor in catalysis.

The protein belongs to the IlvD/Edd family. As to quaternary structure, homodimer. It depends on [2Fe-2S] cluster as a cofactor. Mg(2+) is required as a cofactor.

It catalyses the reaction (2R)-2,3-dihydroxy-3-methylbutanoate = 3-methyl-2-oxobutanoate + H2O. The catalysed reaction is (2R,3R)-2,3-dihydroxy-3-methylpentanoate = (S)-3-methyl-2-oxopentanoate + H2O. It participates in amino-acid biosynthesis; L-isoleucine biosynthesis; L-isoleucine from 2-oxobutanoate: step 3/4. The protein operates within amino-acid biosynthesis; L-valine biosynthesis; L-valine from pyruvate: step 3/4. Functionally, functions in the biosynthesis of branched-chain amino acids. Catalyzes the dehydration of (2R,3R)-2,3-dihydroxy-3-methylpentanoate (2,3-dihydroxy-3-methylvalerate) into 2-oxo-3-methylpentanoate (2-oxo-3-methylvalerate) and of (2R)-2,3-dihydroxy-3-methylbutanoate (2,3-dihydroxyisovalerate) into 2-oxo-3-methylbutanoate (2-oxoisovalerate), the penultimate precursor to L-isoleucine and L-valine, respectively. In Chloroherpeton thalassium (strain ATCC 35110 / GB-78), this protein is Dihydroxy-acid dehydratase.